Here is a 382-residue protein sequence, read N- to C-terminus: Galactokinase (382 aa).

34-37 (EHTD) is a substrate binding site. 124–130 (GAGLSSS) contacts ATP. Residues serine 130 and glutamate 162 each coordinate Mg(2+). Aspartate 174 acts as the Proton acceptor in catalysis. Tyrosine 223 is a binding site for substrate.

Belongs to the GHMP kinase family. GalK subfamily.

Its subcellular location is the cytoplasm. It carries out the reaction alpha-D-galactose + ATP = alpha-D-galactose 1-phosphate + ADP + H(+). Its pathway is carbohydrate metabolism; galactose metabolism. In terms of biological role, catalyzes the transfer of the gamma-phosphate of ATP to D-galactose to form alpha-D-galactose-1-phosphate (Gal-1-P). This is Galactokinase from Salmonella paratyphi B (strain ATCC BAA-1250 / SPB7).